Reading from the N-terminus, the 144-residue chain is Large ribosomal subunit protein uL13 (144 aa).

The protein belongs to the universal ribosomal protein uL13 family. Part of the 50S ribosomal subunit.

In terms of biological role, this protein is one of the early assembly proteins of the 50S ribosomal subunit, although it is not seen to bind rRNA by itself. It is important during the early stages of 50S assembly. This chain is Large ribosomal subunit protein uL13, found in Lawsonia intracellularis (strain PHE/MN1-00).